The chain runs to 354 residues: 3-dehydroquinate synthase (354 aa).

Residues 61–66, 119–120, K132, K141, and 159–162 each bind NAD(+); these read DGESTK, TT, and FLET. Residues E174, H238, and H254 each contribute to the Zn(2+) site.

Belongs to the sugar phosphate cyclases superfamily. Dehydroquinate synthase family. It depends on NAD(+) as a cofactor. The cofactor is Co(2+). Zn(2+) serves as cofactor.

The protein resides in the cytoplasm. The enzyme catalyses 7-phospho-2-dehydro-3-deoxy-D-arabino-heptonate = 3-dehydroquinate + phosphate. Its pathway is metabolic intermediate biosynthesis; chorismate biosynthesis; chorismate from D-erythrose 4-phosphate and phosphoenolpyruvate: step 2/7. In terms of biological role, catalyzes the conversion of 3-deoxy-D-arabino-heptulosonate 7-phosphate (DAHP) to dehydroquinate (DHQ). The polypeptide is 3-dehydroquinate synthase (Saccharolobus solfataricus (strain ATCC 35092 / DSM 1617 / JCM 11322 / P2) (Sulfolobus solfataricus)).